The primary structure comprises 194 residues: MTSEIVLIIGAYLLGSIPTGLLLAKAVGVDIRTTGSGNIGATNVYRTLGRRVGIMTLIGDCLKGLIPVLIARHLQLPEIWVAATGLAAFLGHVYTVFLRFKGGKGVATALGVFIGISPLSVLAALAIFVFTLIKWRYVSLASITAAAAIPFLVALIEKKGLLITMSVIIAALVVFKHRENIRRLRSGTENVFKR.

Helical transmembrane passes span 4–24 (EIVL…LLLA), 78–98 (EIWV…TVFL), 110–130 (LGVF…IFVF), 137–157 (YVSL…ALIE), and 161–181 (LLIT…RENI).

It belongs to the PlsY family. Probably interacts with PlsX.

The protein localises to the cell inner membrane. It carries out the reaction an acyl phosphate + sn-glycerol 3-phosphate = a 1-acyl-sn-glycero-3-phosphate + phosphate. It functions in the pathway lipid metabolism; phospholipid metabolism. Functionally, catalyzes the transfer of an acyl group from acyl-phosphate (acyl-PO(4)) to glycerol-3-phosphate (G3P) to form lysophosphatidic acid (LPA). This enzyme utilizes acyl-phosphate as fatty acyl donor, but not acyl-CoA or acyl-ACP. This is Glycerol-3-phosphate acyltransferase from Geotalea daltonii (strain DSM 22248 / JCM 15807 / FRC-32) (Geobacter daltonii).